The chain runs to 340 residues: Selenide, water dikinase (340 aa).

Cys13 is a catalytic residue. ATP-binding positions include Lys16 and 43 to 45 (ASD). Residue Asp46 coordinates Mg(2+). ATP is bound by residues Asp63, Asp86, and 133-135 (GHS). Mg(2+) is bound at residue Asp86. Asp221 is a Mg(2+) binding site.

This sequence belongs to the selenophosphate synthase 1 family. Class I subfamily. As to quaternary structure, homodimer. Mg(2+) serves as cofactor.

The enzyme catalyses hydrogenselenide + ATP + H2O = selenophosphate + AMP + phosphate + 2 H(+). Functionally, synthesizes selenophosphate from selenide and ATP. The protein is Selenide, water dikinase of Desulfitobacterium hafniense (strain Y51).